We begin with the raw amino-acid sequence, 403 residues long: Phosphopentomutase (403 aa).

The Mn(2+) site is built by D13, D298, H303, D339, H340, and H351.

Belongs to the phosphopentomutase family. Mn(2+) is required as a cofactor.

It is found in the cytoplasm. The enzyme catalyses 2-deoxy-alpha-D-ribose 1-phosphate = 2-deoxy-D-ribose 5-phosphate. It catalyses the reaction alpha-D-ribose 1-phosphate = D-ribose 5-phosphate. It participates in carbohydrate degradation; 2-deoxy-D-ribose 1-phosphate degradation; D-glyceraldehyde 3-phosphate and acetaldehyde from 2-deoxy-alpha-D-ribose 1-phosphate: step 1/2. Its function is as follows. Isomerase that catalyzes the conversion of deoxy-ribose 1-phosphate (dRib-1-P) and ribose 1-phosphate (Rib-1-P) to deoxy-ribose 5-phosphate (dRib-5-P) and ribose 5-phosphate (Rib-5-P), respectively. This Streptococcus suis (strain 05ZYH33) protein is Phosphopentomutase.